A 58-amino-acid polypeptide reads, in one-letter code: Large ribosomal subunit protein uL30 (58 aa).

This sequence belongs to the universal ribosomal protein uL30 family. Part of the 50S ribosomal subunit.

The chain is Large ribosomal subunit protein uL30 from Pseudomonas putida (strain ATCC 700007 / DSM 6899 / JCM 31910 / BCRC 17059 / LMG 24140 / F1).